Here is a 187-residue protein sequence, read N- to C-terminus: uncharacterized protein (187 aa).

The helical transmembrane segment at Phe8 to Leu28 threads the bilayer.

It localises to the membrane. This is an uncharacterized protein from Bacillus subtilis (strain 168).